The sequence spans 416 residues: E3 ubiquitin-protein ligase makorin-2 (416 aa).

2 C3H1-type zinc fingers span residues 2-29 (STKQVTCRYFMHGVCREGSQCLFSHDLA) and 31-58 (SKPSTICKYYQKGYCAYGARCRYDHTKP). Residues 61–144 (AAGGAVGPAP…DPQTSPEMKP (84 aa)) are disordered. The segment covering 95 to 123 (HSNEPGKREKKTLVLRDRNLTGLAEDKTP) has biased composition (basic and acidic residues). The residue at position 139 (S139) is a Phosphoserine. The C3H1-type 3 zinc-finger motif lies at 165 to 192 (SNEPQLCPYAAAGECRFGDACVYLHGDM). The tract at residues 193–222 (CEICRLQVLHPFDPEQRKAHEKMCMSTFEH) is makorin-type Cys-His. An RING-type zinc finger spans residues 238-292 (CSICMEVILEKASASERRFGILSNCSHTYCLSCIRQWRCAKQFENPIIKSCPECR). A C3H1-type 4 zinc finger spans residues 321–350 (GMGKKACKYFEQGKGTCPFGSKCLYRHAYP).

As to quaternary structure, interacts with PDLIM2 (via LIM zinc-binding domain). Interacts with RELA. In terms of tissue distribution, highly expressed in the testis, and lower expression in the brain, thymus, heart, lung, liver, spleen, kidney, ovary, uterus, and seminal vesicle (at protein level). Expressed in primary immune cells, such as CD4-positive and CD8-positive T cells, CD19-positive B cells and CD11c-positive dendritic cells, and in embryonic fibroblasts (at protein level).

It is found in the cytoplasm. The protein localises to the nucleus. The catalysed reaction is S-ubiquitinyl-[E2 ubiquitin-conjugating enzyme]-L-cysteine + [acceptor protein]-L-lysine = [E2 ubiquitin-conjugating enzyme]-L-cysteine + N(6)-ubiquitinyl-[acceptor protein]-L-lysine.. It participates in protein modification; protein ubiquitination. In terms of biological role, E3 ubiquitin ligase catalyzing the covalent attachment of ubiquitin moieties onto substrate proteins. Promotes the polyubiquitination and proteasome-dependent degradation of RELA/p65, thereby suppressing RELA-mediated NF-kappa-B transactivation and negatively regulating inflammatory responses. Plays a role in the regulation of spermiation and in male fertility. In Mus musculus (Mouse), this protein is E3 ubiquitin-protein ligase makorin-2 (Mkrn2).